A 37-amino-acid polypeptide reads, in one-letter code: Large ribosomal subunit protein bL36 (37 aa).

This sequence belongs to the bacterial ribosomal protein bL36 family.

This chain is Large ribosomal subunit protein bL36, found in Alkaliphilus oremlandii (strain OhILAs) (Clostridium oremlandii (strain OhILAs)).